Reading from the N-terminus, the 554-residue chain is 3-(3-hydroxy-phenyl)propionate/3-hydroxycinnamic acid hydroxylase (554 aa).

FAD is bound by residues 17 to 46 (QVAIAGAGPVGLMMANYLGQMGIDVLVVEK) and 285 to 295 (FRIDRVLLAGD).

The protein belongs to the PheA/TfdB FAD monooxygenase family. Requires FAD as cofactor.

The catalysed reaction is 3-(3-hydroxyphenyl)propanoate + NADH + O2 + H(+) = 3-(2,3-dihydroxyphenyl)propanoate + NAD(+) + H2O. It catalyses the reaction (2E)-3-(3-hydroxyphenyl)prop-2-enoate + NADH + O2 + H(+) = (2E)-3-(2,3-dihydroxyphenyl)prop-2-enoate + NAD(+) + H2O. Its pathway is aromatic compound metabolism; 3-phenylpropanoate degradation. Functionally, catalyzes the insertion of one atom of molecular oxygen into position 2 of the phenyl ring of 3-(3-hydroxyphenyl)propionate (3-HPP) and hydroxycinnamic acid (3HCI). The polypeptide is 3-(3-hydroxy-phenyl)propionate/3-hydroxycinnamic acid hydroxylase (Escherichia coli O17:K52:H18 (strain UMN026 / ExPEC)).